We begin with the raw amino-acid sequence, 273 residues long: Rhamnulose-1-phosphate aldolase (273 aa).

Residue Glu-117 is part of the active site. Positions 140, 142, and 211 each coordinate Zn(2+).

Belongs to the aldolase class II family. RhaD subfamily. Requires Zn(2+) as cofactor.

The protein resides in the cytoplasm. It carries out the reaction L-rhamnulose 1-phosphate = (S)-lactaldehyde + dihydroxyacetone phosphate. The protein operates within carbohydrate degradation; L-rhamnose degradation; glycerone phosphate from L-rhamnose: step 3/3. Functionally, catalyzes the reversible cleavage of L-rhamnulose-1-phosphate to dihydroxyacetone phosphate (DHAP) and L-lactaldehyde. The polypeptide is Rhamnulose-1-phosphate aldolase (Listeria monocytogenes serotype 4a (strain HCC23)).